The sequence spans 625 residues: ATP-binding cassette sub-family F member 2 (625 aa).

Residues 1–54 are disordered; sequence MPSDLAKKKAAKKKEAAKARQRPRKGHEENGDAITEPQVAEERNEEANGRETTE. A compositionally biased stretch (basic and acidic residues) spans 40-54; that stretch reads AEERNEEANGRETTE. 2 consecutive ABC transporter domains span residues 88–327 and 398–615; these read AHII…ENQM and IMVQ…VGEE. 120–127 contacts ATP; that stretch reads GLNGIGKS. Position 220 is a phosphothreonine (Thr220). Lys306 bears the N6-acetyllysine mark. Residue 432-439 participates in ATP binding; it reads GPNGAGKS. Phosphoserine is present on Ser514.

It belongs to the ABC transporter superfamily. ABCF family. EF3 subfamily.

This chain is ATP-binding cassette sub-family F member 2 (ABCF2), found in Bos taurus (Bovine).